A 164-amino-acid chain; its full sequence is ATP synthase subunit b (164 aa).

A helical membrane pass occupies residues G6 to I26.

Belongs to the ATPase B chain family. In terms of assembly, F-type ATPases have 2 components, F(1) - the catalytic core - and F(0) - the membrane proton channel. F(1) has five subunits: alpha(3), beta(3), gamma(1), delta(1), epsilon(1). F(0) has three main subunits: a(1), b(2) and c(10-14). The alpha and beta chains form an alternating ring which encloses part of the gamma chain. F(1) is attached to F(0) by a central stalk formed by the gamma and epsilon chains, while a peripheral stalk is formed by the delta and b chains.

The protein resides in the cell membrane. Its function is as follows. F(1)F(0) ATP synthase produces ATP from ADP in the presence of a proton or sodium gradient. F-type ATPases consist of two structural domains, F(1) containing the extramembraneous catalytic core and F(0) containing the membrane proton channel, linked together by a central stalk and a peripheral stalk. During catalysis, ATP synthesis in the catalytic domain of F(1) is coupled via a rotary mechanism of the central stalk subunits to proton translocation. Component of the F(0) channel, it forms part of the peripheral stalk, linking F(1) to F(0). This Streptococcus pyogenes serotype M3 (strain ATCC BAA-595 / MGAS315) protein is ATP synthase subunit b.